The sequence spans 86 residues: Large ribosomal subunit protein eL30 (86 aa).

It belongs to the eukaryotic ribosomal protein eL30 family.

This chain is Large ribosomal subunit protein eL30 (rpl30e), found in Archaeoglobus fulgidus (strain ATCC 49558 / DSM 4304 / JCM 9628 / NBRC 100126 / VC-16).